The sequence spans 71 residues: Probable ribosome maturation protein RlbA (71 aa).

The S4 RNA-binding domain maps to Ile12–Val69.

In terms of biological role, may assist in the assembly of the 50S subunit. In Bacillus subtilis (strain 168), this protein is Probable ribosome maturation protein RlbA.